A 190-amino-acid chain; its full sequence is MAGRLIYLIGPSGSGKDSLLDAARPRLAERGCRIVRRVITRSAEAVGEAAQGVSPEQFATMQAEGAFALSWQANGLSYGIPREIDDWLAAGDDVLVNGSRAHLAQTRERYPTLLVLLLTVDQAVLRQRLIARGREALADIEARLARNARFTADLIAGHGAGLFVLDNSGPLAHTVERLLCCLDHGHSACA.

10–17 (GPSGSGKD) lines the ATP pocket.

This sequence belongs to the ribose 1,5-bisphosphokinase family.

The catalysed reaction is alpha-D-ribose 1,5-bisphosphate + ATP = 5-phospho-alpha-D-ribose 1-diphosphate + ADP. The protein operates within metabolic intermediate biosynthesis; 5-phospho-alpha-D-ribose 1-diphosphate biosynthesis; 5-phospho-alpha-D-ribose 1-diphosphate from D-ribose 5-phosphate (route II): step 3/3. In terms of biological role, catalyzes the phosphorylation of ribose 1,5-bisphosphate to 5-phospho-D-ribosyl alpha-1-diphosphate (PRPP). The protein is Ribose 1,5-bisphosphate phosphokinase PhnN of Pseudomonas fluorescens (strain SBW25).